The following is a 266-amino-acid chain: Putative carbamate hydrolase RutD (266 aa).

Belongs to the AB hydrolase superfamily. Hydrolase RutD family.

It catalyses the reaction carbamate + 2 H(+) = NH4(+) + CO2. Its function is as follows. Involved in pyrimidine catabolism. May facilitate the hydrolysis of carbamate, a reaction that can also occur spontaneously. The polypeptide is Putative carbamate hydrolase RutD (Escherichia coli O26:H11 (strain 11368 / EHEC)).